Here is a 329-residue protein sequence, read N- to C-terminus: Phenylalanine--tRNA ligase alpha subunit (329 aa).

A Mg(2+)-binding site is contributed by E254.

Belongs to the class-II aminoacyl-tRNA synthetase family. Phe-tRNA synthetase alpha subunit type 1 subfamily. As to quaternary structure, tetramer of two alpha and two beta subunits. It depends on Mg(2+) as a cofactor.

The protein localises to the cytoplasm. The enzyme catalyses tRNA(Phe) + L-phenylalanine + ATP = L-phenylalanyl-tRNA(Phe) + AMP + diphosphate + H(+). The protein is Phenylalanine--tRNA ligase alpha subunit of Actinobacillus succinogenes (strain ATCC 55618 / DSM 22257 / CCUG 43843 / 130Z).